A 386-amino-acid polypeptide reads, in one-letter code: Microtubule-binding protein TANGLED1 (386 aa).

5 disordered regions span residues 83–105, 140–202, 244–266, 303–330, and 345–386; these read RMRG…GVGG, AAGA…RVRS, HAST…QKRL, PARP…CSFS, and RLSL…ISSR. The span at 170–180 shows a compositional bias: basic residues; that stretch reads RARRAREKQSH. Over residues 181-193 the composition is skewed to low complexity; it reads RGGAATRGADAAT. The span at 375 to 386 shows a compositional bias: polar residues; it reads TVRTVSSKISSR.

As to expression, expressed in vegetative shoot tips consisting of leaf primordia and the bases of immature leaves, the shoot apical meristem, and unexpanded stem tissue. Strongly expressed in tissues enriched in dividing cells: ear primordia and embryos.

Its subcellular location is the cytoplasm. The protein resides in the cytoskeleton. It is found in the spindle. The protein localises to the phragmoplast. Its function is as follows. Is required for spatial control cell division during leaf development. Through an association with microtubules, acts both for the positioning of cytoskeletal arrays that establish planes of cell division during prophase and for spatial guidance of expanding phragmoplasts toward preestablished cortical division sites (CDS) during cytokinesis. This Zea mays (Maize) protein is Microtubule-binding protein TANGLED1 (TAN1).